The following is a 443-amino-acid chain: ATP-dependent protease ATPase subunit HslU (443 aa).

ATP-binding positions include Val-18 and 60-65; that span reads GVGKTE. The tract at residues 136–158 is disordered; that stretch reads LPPPRDFNEDSQRTNADSSTRQL. A compositionally biased stretch (polar residues) spans 148–157; it reads RTNADSSTRQ. Residues Asp-256, Glu-321, and Arg-393 each coordinate ATP.

Belongs to the ClpX chaperone family. HslU subfamily. In terms of assembly, a double ring-shaped homohexamer of HslV is capped on each side by a ring-shaped HslU homohexamer. The assembly of the HslU/HslV complex is dependent on binding of ATP.

It is found in the cytoplasm. ATPase subunit of a proteasome-like degradation complex; this subunit has chaperone activity. The binding of ATP and its subsequent hydrolysis by HslU are essential for unfolding of protein substrates subsequently hydrolyzed by HslV. HslU recognizes the N-terminal part of its protein substrates and unfolds these before they are guided to HslV for hydrolysis. The polypeptide is ATP-dependent protease ATPase subunit HslU (Marinobacter nauticus (strain ATCC 700491 / DSM 11845 / VT8) (Marinobacter aquaeolei)).